A 184-amino-acid chain; its full sequence is Large ribosomal subunit protein uL6 (184 aa).

It belongs to the universal ribosomal protein uL6 family. Part of the 50S ribosomal subunit.

Functionally, this protein binds to the 23S rRNA, and is important in its secondary structure. It is located near the subunit interface in the base of the L7/L12 stalk, and near the tRNA binding site of the peptidyltransferase center. The sequence is that of Large ribosomal subunit protein uL6 from Pseudothermotoga lettingae (strain ATCC BAA-301 / DSM 14385 / NBRC 107922 / TMO) (Thermotoga lettingae).